We begin with the raw amino-acid sequence, 342 residues long: Methylthioribose-1-phosphate isomerase (342 aa).

Substrate is bound by residues 44 to 46, R87, and Q194; that span reads RGA. D235 functions as the Proton donor in the catalytic mechanism. Substrate is bound at residue 245–246; that stretch reads NK.

The protein belongs to the eIF-2B alpha/beta/delta subunits family. MtnA subfamily.

The enzyme catalyses 5-(methylsulfanyl)-alpha-D-ribose 1-phosphate = 5-(methylsulfanyl)-D-ribulose 1-phosphate. Its pathway is amino-acid biosynthesis; L-methionine biosynthesis via salvage pathway; L-methionine from S-methyl-5-thio-alpha-D-ribose 1-phosphate: step 1/6. Catalyzes the interconversion of methylthioribose-1-phosphate (MTR-1-P) into methylthioribulose-1-phosphate (MTRu-1-P). This Acetivibrio thermocellus (strain ATCC 27405 / DSM 1237 / JCM 9322 / NBRC 103400 / NCIMB 10682 / NRRL B-4536 / VPI 7372) (Clostridium thermocellum) protein is Methylthioribose-1-phosphate isomerase.